Reading from the N-terminus, the 152-residue chain is MRKLLISLALAIPVFAVDHNLLQKGYEVYKKHCSACHIERATPEQIKKFRMMAMRGEKLPIAAPPMNEVSARVKKFYPGELEFITFVKDYITNPSREKGVCMPMAFKLFGVMPPIGKALSEEEKEAVAYWLYHNYKESWKEMMRKMHGKMMH.

The signal sequence occupies residues 1-16 (MRKLLISLALAIPVFA). The region spanning 20-135 (NLLQKGYEVY…AVAYWLYHNY (116 aa)) is the Cytochrome c domain. Residues cysteine 33, cysteine 36, and histidine 37 each contribute to the heme c site.

This is an uncharacterized protein from Aquifex aeolicus (strain VF5).